The chain runs to 351 residues: Protein Maqu_2141 (351 aa).

The protein belongs to the proline racemase family.

Displays neither proline racemase activity nor trans-4-hydroxy-L-proline (t4LHyp) epimerase activity nor t3LHyp dehydratase activity. This is Protein Maqu_2141 from Marinobacter nauticus (strain ATCC 700491 / DSM 11845 / VT8) (Marinobacter aquaeolei).